A 431-amino-acid chain; its full sequence is Trigger factor (431 aa).

Residues 163–248 form the PPIase FKBP-type domain; it reads GDTAVLDFEG…IHDVKRKELP (86 aa).

The protein belongs to the FKBP-type PPIase family. Tig subfamily.

It is found in the cytoplasm. The catalysed reaction is [protein]-peptidylproline (omega=180) = [protein]-peptidylproline (omega=0). Involved in protein export. Acts as a chaperone by maintaining the newly synthesized protein in an open conformation. Functions as a peptidyl-prolyl cis-trans isomerase. The polypeptide is Trigger factor (tig) (Halalkalibacterium halodurans (strain ATCC BAA-125 / DSM 18197 / FERM 7344 / JCM 9153 / C-125) (Bacillus halodurans)).